The following is a 67-amino-acid chain: Large ribosomal subunit protein bL35 (67 aa).

Belongs to the bacterial ribosomal protein bL35 family.

This chain is Large ribosomal subunit protein bL35, found in Brachyspira hyodysenteriae (strain ATCC 49526 / WA1).